We begin with the raw amino-acid sequence, 359 residues long: Peptide chain release factor 1 (359 aa).

The residue at position 236 (glutamine 236) is an N5-methylglutamine.

The protein belongs to the prokaryotic/mitochondrial release factor family. In terms of processing, methylated by PrmC. Methylation increases the termination efficiency of RF1.

It is found in the cytoplasm. Its function is as follows. Peptide chain release factor 1 directs the termination of translation in response to the peptide chain termination codons UAG and UAA. The chain is Peptide chain release factor 1 from Streptococcus pyogenes serotype M3 (strain ATCC BAA-595 / MGAS315).